A 437-amino-acid polypeptide reads, in one-letter code: GTPase Obg (437 aa).

In terms of domain architecture, Obg spans 2 to 160 (SMFLDTAKVS…RQLELELKIL (159 aa)). The 178-residue stretch at 161–338 (ADVGLVGFPS…LLEATAELLA (178 aa)) folds into the OBG-type G domain. Residues 167–174 (GFPSVGKS), 192–196 (FTTIV), 214–217 (DLPG), 284–287 (NKMD), and 319–321 (SSL) each bind GTP. 2 residues coordinate Mg(2+): serine 174 and threonine 194. The region spanning 359–437 (GFAAEEKAFE…IGKFEFEFVD (79 aa)) is the OCT domain.

Belongs to the TRAFAC class OBG-HflX-like GTPase superfamily. OBG GTPase family. Monomer. The cofactor is Mg(2+).

It localises to the cytoplasm. Its function is as follows. An essential GTPase which binds GTP, GDP and possibly (p)ppGpp with moderate affinity, with high nucleotide exchange rates and a fairly low GTP hydrolysis rate. Plays a role in control of the cell cycle, stress response, ribosome biogenesis and in those bacteria that undergo differentiation, in morphogenesis control. This is GTPase Obg from Streptococcus equi subsp. equi (strain 4047).